Consider the following 499-residue polypeptide: Glycerol kinase (499 aa).

Thr-17 contacts ADP. The ATP site is built by Thr-17, Thr-18, and Ser-19. Position 17 (Thr-17) interacts with sn-glycerol 3-phosphate. Residue Arg-21 participates in ADP binding. The sn-glycerol 3-phosphate site is built by Arg-87, Glu-88, Tyr-139, and Asp-243. Arg-87, Glu-88, Tyr-139, Asp-243, and Gln-244 together coordinate glycerol. ADP-binding residues include Thr-265 and Gly-308. ATP is bound by residues Thr-265, Gly-308, Gln-312, and Gly-409. ADP is bound by residues Gly-409 and Asn-413.

Belongs to the FGGY kinase family.

It carries out the reaction glycerol + ATP = sn-glycerol 3-phosphate + ADP + H(+). It functions in the pathway polyol metabolism; glycerol degradation via glycerol kinase pathway; sn-glycerol 3-phosphate from glycerol: step 1/1. With respect to regulation, inhibited by fructose 1,6-bisphosphate (FBP). Key enzyme in the regulation of glycerol uptake and metabolism. Catalyzes the phosphorylation of glycerol to yield sn-glycerol 3-phosphate. This is Glycerol kinase from Pseudomonas entomophila (strain L48).